A 390-amino-acid polypeptide reads, in one-letter code: Aspergillopepsin-1 (390 aa).

The first 19 residues, 1–19 (MVNTSLLAALTAYAVAVAA), serve as a signal peptide directing secretion. Residues 20-67 (APTAPQVKGFSVNQVAVPKGVYRHPAAQLAKAYGKYHATVPTQVAAAA) constitute a propeptide, activation peptide. Positions 84 to 387 (YITQVTVGDD…DASGPRLGFA (304 aa)) constitute a Peptidase A1 domain. Active-site residues include aspartate 100 and aspartate 281.

Belongs to the peptidase A1 family. In terms of assembly, monomer.

It localises to the secreted. It catalyses the reaction Hydrolysis of proteins with broad specificity. Generally favors hydrophobic residues in P1 and P1', but also accepts Lys in P1, which leads to activation of trypsinogen. Does not clot milk.. With respect to regulation, inhibited by the microbial peptide pepstatin A. Secreted aspartic endopeptidase that allows assimilation of proteinaceous substrates. The scissile peptide bond is attacked by a nucleophilic water molecule activated by two aspartic residues in the active site. Shows a broad primary substrate specificity. Favors hydrophobic residues at the P1 and P1' positions, but also accepts a lysine residue in the P1 position, leading to the activation of trypsinogen and chymotrypsinogen A. Hydrolyzes myoglobin, hemoglobin and other natural proteins. Hydrolyzes equine myoglobin between positions 'Met-1' and 'Gly-2', 'Lys-43' and 'Phe-44', and 'Leu-70' and 'Thr-71'. The polypeptide is Aspergillopepsin-1 (pepA) (Aspergillus pseudoglaucus (Eurotium repens)).